The following is a 563-amino-acid chain: Urocanate hydratase (563 aa).

NAD(+) contacts are provided by residues 53–54, glutamine 131, 177–179, glutamate 197, arginine 202, 243–244, 264–268, 274–275, and tyrosine 323; these read GG, GMG, NA, QTSAH, and YL. The active site involves cysteine 411. Position 493 (glycine 493) interacts with NAD(+).

It belongs to the urocanase family. NAD(+) is required as a cofactor.

It localises to the cytoplasm. The enzyme catalyses 4-imidazolone-5-propanoate = trans-urocanate + H2O. The protein operates within amino-acid degradation; L-histidine degradation into L-glutamate; N-formimidoyl-L-glutamate from L-histidine: step 2/3. In terms of biological role, catalyzes the conversion of urocanate to 4-imidazolone-5-propionate. The sequence is that of Urocanate hydratase from Yersinia pestis bv. Antiqua (strain Antiqua).